We begin with the raw amino-acid sequence, 375 residues long: MENFPTEYFLNTSVRLLEYIRYRDSNYTREERIENLHYAYNKAAHHFAQPRQQQMLKVDPKRLQASLQTIVGMVVYSWAKVSKECMADLSIHYTYTLVLDDSSDDPHPAMLNYFDDLQAGREQAHPWWALVNEHFPNVLRHFGPFCSLNLIRSTMDFFEGCWIEQYNFGGFPGSDDYPQFLRRMNGLGHCVGASLWPKELFDERKNFLEITTAVAQMENWMVWVNDLMSFYKEFDDERDQISLVKNFVTCHEITLDEALEKLTQETLHSSKQMVAVFADKDPQVMDTIECFMHGYVTWHLCDARYRLHEIYKKVKDQDTEDAKKFCKFFEQAANVGAVAPSEWAYPQVAQLANVRAKGDVKEAQKPILSSIELVE.

The protein belongs to the trichodiene synthase family.

The enzyme catalyses (2E,6E)-farnesyl diphosphate = trichodiene + diphosphate. It participates in sesquiterpene biosynthesis; trichothecene biosynthesis. TS is a member of the terpene cyclase group of enzymes. It catalyzes the isomerization and cyclization of farnesyl pyro-phosphate to form trichodiene, the first cyclic intermediate in the biosynthetic pathway for trichothecenes. It serves to branch trichothecene biosynthesis from the isoprenoid pathway. This is Trichodiene synthase (TRI5) from Fusarium boothii.